Here is a 360-residue protein sequence, read N- to C-terminus: Aminomethyltransferase (360 aa).

This sequence belongs to the GcvT family. In terms of assembly, the glycine cleavage system is composed of four proteins: P, T, L and H.

The catalysed reaction is N(6)-[(R)-S(8)-aminomethyldihydrolipoyl]-L-lysyl-[protein] + (6S)-5,6,7,8-tetrahydrofolate = N(6)-[(R)-dihydrolipoyl]-L-lysyl-[protein] + (6R)-5,10-methylene-5,6,7,8-tetrahydrofolate + NH4(+). Functionally, the glycine cleavage system catalyzes the degradation of glycine. The sequence is that of Aminomethyltransferase from Flavobacterium psychrophilum (strain ATCC 49511 / DSM 21280 / CIP 103535 / JIP02/86).